The following is a 1760-amino-acid chain: Chitin synthase A (1760 aa).

N-linked (GlcNAc...) asparagine glycosylation is present at asparagine 157. 2 helical membrane-spanning segments follow: residues 729 to 749 and 765 to 785; these read IWTG…LRFV and LVLV…IIAF. 2 N-linked (GlcNAc...) asparagine glycosylation sites follow: asparagine 876 and asparagine 996. A helical transmembrane segment spans residues 1027-1047; it reads ILLAFTCLICAVILVKFLAAL. N-linked (GlcNAc...) asparagine glycosylation occurs at asparagine 1392. The next 3 membrane-spanning stretches (helical) occupy residues 1417–1437, 1449–1469, and 1477–1497; these read FVVL…VYLG, IPII…IIFI, and IGWM…LPMY. Asparagine 1557, asparagine 1645, and asparagine 1650 each carry an N-linked (GlcNAc...) asparagine glycan. The tract at residues 1670 to 1691 is disordered; the sequence is DNLLGVPRPNSRSPVGGYTSRP. Residues 1702–1758 enclose the DEK-C domain; it reads GPDEMAITDAIRSCLAEVDLDTVTKKQVRALVEQRLQATLTGDKRAFLDRQIDQELA.

Belongs to the chitin synthase family. Class V subfamily.

The protein resides in the cell membrane. The catalysed reaction is [(1-&gt;4)-N-acetyl-beta-D-glucosaminyl](n) + UDP-N-acetyl-alpha-D-glucosamine = [(1-&gt;4)-N-acetyl-beta-D-glucosaminyl](n+1) + UDP + H(+). Functionally, polymerizes chitin, a structural polymer of the cell wall and septum, by transferring the sugar moiety of UDP-GlcNAc to the non-reducing end of the growing chitin polymer. Plays an important role in cell-wall formation during both hyphal growth and conidiation. The polypeptide is Chitin synthase A (Aspergillus oryzae (strain ATCC 42149 / RIB 40) (Yellow koji mold)).